The sequence spans 143 residues: Anti-sigma F factor (143 aa).

This sequence belongs to the anti-sigma-factor family.

The enzyme catalyses L-seryl-[protein] + ATP = O-phospho-L-seryl-[protein] + ADP + H(+). It carries out the reaction L-threonyl-[protein] + ATP = O-phospho-L-threonyl-[protein] + ADP + H(+). Binds to sigma F and blocks its ability to form an RNA polymerase holoenzyme (E-sigma F). Phosphorylates SpoIIAA on a serine residue. This phosphorylation may enable SpoIIAA to act as an anti-anti-sigma factor that counteracts SpoIIAB and thus releases sigma F from inhibition. The sequence is that of Anti-sigma F factor from Thermoanaerobacter pseudethanolicus (strain ATCC 33223 / 39E) (Clostridium thermohydrosulfuricum).